A 215-amino-acid chain; its full sequence is Cytochrome b6 (215 aa).

Residues 32–52 (IFYCLGGITLTCFLIQFATGF) form a helical membrane-spanning segment. Cys35 contributes to the heme c binding site. Heme b-binding residues include His86 and His100. 3 helical membrane passes run 90-110 (ASMM…TGGF), 116-136 (LTWV…VTGY), and 186-206 (LHTF…FLMI). Heme b-binding residues include His187 and His202.

The protein belongs to the cytochrome b family. PetB subfamily. The 4 large subunits of the cytochrome b6-f complex are cytochrome b6, subunit IV (17 kDa polypeptide, PetD), cytochrome f and the Rieske protein, while the 4 small subunits are PetG, PetL, PetM and PetN. The complex functions as a dimer. Heme b is required as a cofactor. The cofactor is heme c.

It localises to the cellular thylakoid membrane. Functionally, component of the cytochrome b6-f complex, which mediates electron transfer between photosystem II (PSII) and photosystem I (PSI), cyclic electron flow around PSI, and state transitions. The polypeptide is Cytochrome b6 (Synechococcus elongatus (strain ATCC 33912 / PCC 7942 / FACHB-805) (Anacystis nidulans R2)).